Consider the following 218-residue polypeptide: Cytochrome b6 (218 aa).

Residues 35-55 (IFYCLGGITLVCFLIQFATGF) traverse the membrane as a helical segment. C38 contributes to the heme c binding site. Residues H89 and H103 each contribute to the heme b site. The next 3 membrane-spanning stretches (helical) occupy residues 93–113 (ASMM…TGGF), 119–139 (LTWI…VTGY), and 189–209 (LHTF…FLMI). Positions 190 and 205 each coordinate heme b.

Belongs to the cytochrome b family. PetB subfamily. As to quaternary structure, the 4 large subunits of the cytochrome b6-f complex are cytochrome b6, subunit IV (17 kDa polypeptide, PetD), cytochrome f and the Rieske protein, while the 4 small subunits are PetG, PetL, PetM and PetN. The complex functions as a dimer. The cofactor is heme b. Heme c is required as a cofactor.

The protein resides in the cellular thylakoid membrane. Functionally, component of the cytochrome b6-f complex, which mediates electron transfer between photosystem II (PSII) and photosystem I (PSI), cyclic electron flow around PSI, and state transitions. The sequence is that of Cytochrome b6 from Prochlorococcus marinus (strain NATL1A).